The chain runs to 359 residues: UPF0284 protein MAE_56900 (359 aa).

It belongs to the UPF0284 family.

This is UPF0284 protein MAE_56900 from Microcystis aeruginosa (strain NIES-843 / IAM M-2473).